The chain runs to 490 residues: Hippocampus abundant transcript 1 protein (490 aa).

M1 carries the N-acetylmethionine modification. Residues 1–40 (MTQGKKKKRAANRSIMLAKKIIIKDGGTPQGIGSPSVYHA) lie on the Extracellular side of the membrane. An N-linked (GlcNAc...) asparagine glycan is attached at N12. A helical transmembrane segment spans residues 41-61 (VIVIFLEFFAWGLLTAPTLVV). At 62 to 74 (LHETFPKHTFLMN) the chain is on the cytoplasmic side. A helical membrane pass occupies residues 75–95 (GLIQGVKGLLSFLSAPLIGAL). The Extracellular portion of the chain corresponds to 96–103 (SDVWGRKS). Residues 104-124 (FLLLTVFFTCAPIPLMKISPW) traverse the membrane as a helical segment. Residues 125 to 126 (WY) are Cytoplasmic-facing. A helical membrane pass occupies residues 127–147 (FAVISVSGVFAVTFSVVFAYV). Topologically, residues 148 to 160 (ADITQEHERSMAY) are extracellular. The chain crosses the membrane as a helical span at residues 161–181 (GLVSATFAASLVTSPAIGAYL). At 182–188 (GRVYGDS) the chain is on the cytoplasmic side. A helical membrane pass occupies residues 189 to 209 (LVVVLATAIALLDICFILVAV). Residues 210-243 (PESLPEKMRPASWGAPISWEQADPFASLKKVGQD) are Extracellular-facing. Residues 244–264 (SIVLLICITVFLSYLPEAGQY) traverse the membrane as a helical segment. The Cytoplasmic segment spans residues 265-284 (SSFFLYLRQIMKFSPESVAA). A helical transmembrane segment spans residues 285–305 (FIAVLGILSIIAQTIVLSLLM). The Extracellular portion of the chain corresponds to 306–313 (RSIGNKNT). The chain crosses the membrane as a helical span at residues 314 to 334 (ILLGLGFQILQLAWYGFGSEP). Residues 335–337 (WMM) lie on the Cytoplasmic side of the membrane. A helical membrane pass occupies residues 338–358 (WAAGAVAAMSSITFPAVSALV). Topologically, residues 359 to 379 (SRTADADQQGVVQGMITGIRG) are extracellular. A helical transmembrane segment spans residues 380–400 (LCNGLGPALYGFIFYIFHVEL). The Cytoplasmic segment spans residues 401–427 (KELPITGTDLGTNTSPQHHFEQNSIIP). The chain crosses the membrane as a helical span at residues 428–448 (GPPFLFGACSVLLALLVALFI). Residues 449-490 (PEHTNLSLRSSSWRKHCGSHSHPHSTQAPGEAKEPLLQDTNV) are Extracellular-facing. N-linked (GlcNAc...) asparagine glycosylation occurs at N453. Residues 466–490 (GSHSHPHSTQAPGEAKEPLLQDTNV) form a disordered region.

Belongs to the major facilitator superfamily. As to expression, expressed in various tissues.

It localises to the membrane. This Mus musculus (Mouse) protein is Hippocampus abundant transcript 1 protein.